A 79-amino-acid chain; its full sequence is Putative membrane protein insertion efficiency factor (79 aa).

The protein belongs to the UPF0161 family.

It localises to the cell inner membrane. In terms of biological role, could be involved in insertion of integral membrane proteins into the membrane. This chain is Putative membrane protein insertion efficiency factor, found in Prochlorococcus marinus (strain SARG / CCMP1375 / SS120).